The following is a 342-amino-acid chain: Galactose mutarotase (342 aa).

Residue Ala2 is modified to N-acetylalanine. Residue Ser14 is modified to Phosphoserine. Residues Asn81–Arg82 and His107 each bind beta-D-galactose. Ser124 bears the Phosphoserine mark. The active-site Proton donor is His176. Beta-D-galactose is bound by residues His176 to Tyr178, Asp243, Gln279, and Glu307. Glu307 serves as the catalytic Proton acceptor.

It belongs to the aldose epimerase family. In terms of assembly, monomer.

The protein resides in the cytoplasm. It catalyses the reaction alpha-D-galactose = beta-D-galactose. The enzyme catalyses alpha-D-glucose = beta-D-glucose. Its pathway is carbohydrate metabolism; hexose metabolism. It participates in carbohydrate metabolism; galactose metabolism. In terms of biological role, mutarotase that catalyzes the interconversion of beta-D-galactose and alpha-D-galactose during galactose metabolism. Beta-D-galactose is metabolized in the liver into glucose 1-phosphate, the primary metabolic fuel, by the action of four enzymes that constitute the Leloir pathway: GALM, GALK1 (galactokinase), GALT (galactose-1-phosphate uridylyltransferase) and GALE (UDP-galactose-4'-epimerase). Involved in the maintenance of the equilibrium between the beta- and alpha-anomers of galactose, therefore ensuring a sufficient supply of the alpha-anomer for GALK1. Also active on D-glucose although shows a preference for galactose over glucose. The sequence is that of Galactose mutarotase from Homo sapiens (Human).